The chain runs to 156 residues: ATP synthase subunit b (156 aa).

A helical membrane pass occupies residues 12-32; it reads IAFAIFVWFCVKYVWPPITAA.

This sequence belongs to the ATPase B chain family. As to quaternary structure, F-type ATPases have 2 components, F(1) - the catalytic core - and F(0) - the membrane proton channel. F(1) has five subunits: alpha(3), beta(3), gamma(1), delta(1), epsilon(1). F(0) has three main subunits: a(1), b(2) and c(10-14). The alpha and beta chains form an alternating ring which encloses part of the gamma chain. F(1) is attached to F(0) by a central stalk formed by the gamma and epsilon chains, while a peripheral stalk is formed by the delta and b chains.

It localises to the cell inner membrane. Its function is as follows. F(1)F(0) ATP synthase produces ATP from ADP in the presence of a proton or sodium gradient. F-type ATPases consist of two structural domains, F(1) containing the extramembraneous catalytic core and F(0) containing the membrane proton channel, linked together by a central stalk and a peripheral stalk. During catalysis, ATP synthesis in the catalytic domain of F(1) is coupled via a rotary mechanism of the central stalk subunits to proton translocation. Functionally, component of the F(0) channel, it forms part of the peripheral stalk, linking F(1) to F(0). This chain is ATP synthase subunit b, found in Marinobacter nauticus (strain ATCC 700491 / DSM 11845 / VT8) (Marinobacter aquaeolei).